We begin with the raw amino-acid sequence, 568 residues long: Phosphoprotein (568 aa).

The segment at 1-24 (MDQDAFFFERDPEAEGEAPRKQES) is disordered. Basic and acidic residues predominate over residues 7–24 (FFERDPEAEGEAPRKQES). Positions 33 to 41 (DVVLSYKPT) are N0 binding. Residues 45–324 (EDRSWLHGII…ANEEETSNTS (280 aa)) form a disordered region. Basic and acidic residues-rich tracts occupy residues 56–105 (NPKE…HARI), 132–144 (RNTRIDEDSPNER), and 151–167 (LTDEDRKMAEDSNKREE). The segment covering 190–208 (RTNNNGRSMETSSTHSTRI) has biased composition (polar residues). A compositionally biased stretch (basic and acidic residues) spans 239–253 (TRSERTQNSELHKST). A compositionally biased stretch (polar residues) spans 294–305 (YTMNNANNNTKS). Residues 344 to 411 (FELSRSASHV…SSRDLHKRFS (68 aa)) form a multimerization region. Positions 387-416 (EENRTLLKQIQEEINSSRDLHKRFSEYQKE) form a coiled coil. The tract at residues 412 to 445 (EYQKEQNSLMMANLSTLHIITDRGGKTGDPSDTT) is l protein binding. The tract at residues 434 to 455 (RGGKTGDPSDTTRSPSVFTKGK) is disordered. Polar residues predominate over residues 441–450 (PSDTTRSPSV). An interaction with the nucleocapsid (N-RNA) region spans residues 479–568 (DLIREDELRD…FEEDIDSLTN (90 aa)).

The protein belongs to the respirovirus P protein family. As to quaternary structure, homotetramer. Interacts (via multimerization domain) with polymerase L; this interaction forms the polymerase complex. Interacts (via N-terminus) with N0; this interaction allows P to chaperon N0 before encapsidation and form the N-P complex. Interacts (via C-terminus) with N-RNA template; this interaction positions the polymerase on the template.

Functionally, essential cofactor of the RNA polymerase L that plays a central role in the transcription and replication by forming the polymerase complex with RNA polymerase L and recruiting L to the genomic N-RNA template for RNA synthesis. Also plays a central role in the encapsidation of nascent RNA chains by forming the encapsidation complex with the nucleocapsid protein N (N-P complex). Acts as a chaperone for newly synthesized free N protein, so-called N0, allowing encapsidation of nascent RNA chains during replication. The nucleoprotein protein N prevents excessive phosphorylation of P, which leads to down-regulation of viral transcription/ replication. Participates, together with N, in the formation of viral factories (viroplasms), which are large inclusions in the host cytoplasm where replication takes place. Recruits host PI4KB and remodel the host endoplasmic reticulum membrane to form viral replication factories. This chain is Phosphoprotein (P/C), found in Human parainfluenza 1 virus (strain C35) (HPIV-1).